Here is a 248-residue protein sequence, read N- to C-terminus: PF03932 family protein CutC (248 aa).

Belongs to the CutC family. Homodimer.

It is found in the cytoplasm. This is PF03932 family protein CutC from Shigella boydii serotype 18 (strain CDC 3083-94 / BS512).